A 313-amino-acid polypeptide reads, in one-letter code: MKSKRRHSGRDVNGILLLDKPKNFSSNQVLQKVKSLFAARRAGHTGALDPLATGMLPICLGEATKFSPFLLNADKRYRVTAYLGHKTETSDAEGSVINKREITFTQPQLEEALEKFRGPILQIPSMYSALKHQGRPLYEYARQGVTLDREARRITVFDLQCLRWEGHELELEIHCSKGTYIRTIVDDLGEVLGCGAYVSDLRRLQVADYTHDSMVTLEKLEELTLKNNTLGSAIDLLLLPIESTALHLPEVNLESGAAACIKQGQPVSFFDNPTDTMVRLTEGGERHFIGIGIIDAHGRIAPKRLLRNVSDAL.

A substrate-binding site is contributed by His44. The Nucleophile role is filled by Asp49. Tyr77, Tyr180, and Leu201 together coordinate substrate.

Belongs to the pseudouridine synthase TruB family. Type 1 subfamily.

It catalyses the reaction uridine(55) in tRNA = pseudouridine(55) in tRNA. Responsible for synthesis of pseudouridine from uracil-55 in the psi GC loop of transfer RNAs. In Hamiltonella defensa subsp. Acyrthosiphon pisum (strain 5AT), this protein is tRNA pseudouridine synthase B.